Here is a 144-residue protein sequence, read N- to C-terminus: Large ribosomal subunit protein uL11 (144 aa).

Belongs to the universal ribosomal protein uL11 family. Part of the ribosomal stalk of the 50S ribosomal subunit. Interacts with L10 and the large rRNA to form the base of the stalk. L10 forms an elongated spine to which L12 dimers bind in a sequential fashion forming a multimeric L10(L12)X complex. Post-translationally, one or more lysine residues are methylated.

Its function is as follows. Forms part of the ribosomal stalk which helps the ribosome interact with GTP-bound translation factors. The sequence is that of Large ribosomal subunit protein uL11 from Neisseria meningitidis serogroup C (strain 053442).